Here is a 311-residue protein sequence, read N- to C-terminus: Probable manganese-dependent inorganic pyrophosphatase (311 aa).

Mn(2+) is bound by residues H9, D13, D15, D77, H99, and D151.

Belongs to the PPase class C family. Requires Mn(2+) as cofactor.

It localises to the cytoplasm. It carries out the reaction diphosphate + H2O = 2 phosphate + H(+). In Streptococcus equi subsp. zooepidemicus (strain MGCS10565), this protein is Probable manganese-dependent inorganic pyrophosphatase.